We begin with the raw amino-acid sequence, 520 residues long: Acetyltransferase MAT1 (520 aa).

Active-site proton acceptor residues include His-183 and Asp-456.

The protein belongs to the plant acyltransferase family.

It participates in secondary metabolite biosynthesis. Its function is as follows. Acyl-CoA-dependent acyltransferase; part of the gene cluster that mediates the biosynthesis of mannosylerythritol lipids (MELs), surface-active substances that enhance the availability of water-insoluble substrates. Depending on the number of acetyl groups, mannosylerythritol lipids can be differentiated into MEL A (fully acetylated), MEL B and MEL C (monoacetylated at R-6 and R-4, respectively), and the fully deacetylated MEL D. The first step in the pathway is the generation of mannosylerythritol by the glycosyltransferase EMT1 which catalyzes the transfer of GDP-mannose to the C-4 atom of meso-erythritol. This reaction has to be stereospecific, since only mannosyl-D-erythritol is generated. The produced disaccharide is subsequently acylated with fatty acids of various lengths by the acyltransferases MAC1 and MAC2 at positions C-2 and C-3, repectively. The existence of MEL derivatives which carry an acetyl group at C-2 implies that at least MAC1 also accepts acetyl-CoA as a donor. The final step of MEL biosynthesis is the acetylation of the fully acylated mannosylerythritol lipids catalyzed by the acetyl-CoA-dependent acetyltransferase MAT1. MAT1 displays a relaxed regioselectivity and is able to transfer acetylgroups to both positions C-4 and C-6 of the mannosyl moiety. The protein is Acetyltransferase MAT1 of Pseudozyma antarctica (strain T-34) (Yeast).